We begin with the raw amino-acid sequence, 467 residues long: Argininosuccinate lyase (467 aa).

Belongs to the lyase 1 family. Argininosuccinate lyase subfamily.

The protein resides in the cytoplasm. It carries out the reaction 2-(N(omega)-L-arginino)succinate = fumarate + L-arginine. It functions in the pathway amino-acid biosynthesis; L-arginine biosynthesis; L-arginine from L-ornithine and carbamoyl phosphate: step 3/3. This chain is Argininosuccinate lyase, found in Chromohalobacter salexigens (strain ATCC BAA-138 / DSM 3043 / CIP 106854 / NCIMB 13768 / 1H11).